A 207-amino-acid chain; its full sequence is Tetrathionate reductase subunit B (207 aa).

The first 28 residues, 1-28 (MLISKTLIFYQVVNIVSQKGSGKRRWKM), serve as a signal peptide directing secretion. 3 4Fe-4S ferredoxin-type domains span residues 34-63 (YVYV…PVGY), 75-106 (GRVA…KTEE), and 107-136 (GLVL…RNPV). Cys43, Cys46, Cys49, Cys53, Cys84, Cys87, Cys92, Cys96, Cys116, Cys119, Cys122, Cys126, Cys143, Cys146, Cys157, and Cys161 together coordinate [4Fe-4S] cluster.

Probably composed of three subunits: TtrA, TtrB and TtrC.

The protein resides in the cell membrane. Its function is as follows. Part of a membrane-bound tetrathionate reductase that catalyzes the reduction of tetrathionate to thiosulfate. TtrB is probably involved in transfer of electrons from TtrC to TtrA. The sequence is that of Tetrathionate reductase subunit B (ttrB) from Archaeoglobus fulgidus (strain ATCC 49558 / DSM 4304 / JCM 9628 / NBRC 100126 / VC-16).